The chain runs to 885 residues: Sensor histidine kinase KdpD (885 aa).

4 helical membrane passes run Ala384–Ile404, Ile415–Ile435, Ile436–Arg456, and Phe464–Leu484. The Histidine kinase domain occupies Ser660 to Phe880. The residue at position 663 (His663) is a Phosphohistidine; by autocatalysis.

It localises to the membrane. The enzyme catalyses ATP + protein L-histidine = ADP + protein N-phospho-L-histidine.. Cyclic di-AMP is a negative regulator of the Kdp system. In terms of biological role, member of the two-component regulatory system KdpD/KdpE that regulates the transcription of a series of virulence factors through sensing external K(+) concentrations. Also regulates capsular polysaccharide production. May function as a membrane-associated protein kinase that phosphorylates KdpE in response to environmental signals. In turn, KpdE functions as a transcriptional regulator by direct binding to promoter regions of target genes including spa, hla, aur and geh. The sequence is that of Sensor histidine kinase KdpD from Staphylococcus aureus (strain NCTC 8325 / PS 47).